The following is a 238-amino-acid chain: Uridylate kinase (238 aa).

12–15 is an ATP binding site; it reads KLSG. Residue glycine 54 coordinates UMP. Glycine 55 and arginine 59 together coordinate ATP. UMP is bound by residues aspartate 74 and 135–142; that span reads TGNPFFTT. 3 residues coordinate ATP: threonine 162, tyrosine 168, and aspartate 171.

The protein belongs to the UMP kinase family. In terms of assembly, homohexamer.

It is found in the cytoplasm. The enzyme catalyses UMP + ATP = UDP + ADP. Its pathway is pyrimidine metabolism; CTP biosynthesis via de novo pathway; UDP from UMP (UMPK route): step 1/1. Its activity is regulated as follows. Inhibited by UTP. Catalyzes the reversible phosphorylation of UMP to UDP. This Azoarcus sp. (strain BH72) protein is Uridylate kinase.